Reading from the N-terminus, the 409-residue chain is Histidine--tRNA ligase (409 aa).

This sequence belongs to the class-II aminoacyl-tRNA synthetase family.

Its subcellular location is the cytoplasm. The catalysed reaction is tRNA(His) + L-histidine + ATP = L-histidyl-tRNA(His) + AMP + diphosphate + H(+). In Archaeoglobus fulgidus (strain ATCC 49558 / DSM 4304 / JCM 9628 / NBRC 100126 / VC-16), this protein is Histidine--tRNA ligase (hisS).